The chain runs to 477 residues: Ubiquinone biosynthesis monooxygenase COQ6, mitochondrial (477 aa).

A mitochondrion-targeting transit peptide spans 1-25 (MLGVLRIQGALASAGQARLLSVRLL).

The protein belongs to the UbiH/COQ6 family. As to quaternary structure, component of a multi-subunit COQ enzyme complex. The cofactor is FAD.

The protein localises to the mitochondrion inner membrane. The enzyme catalyses a 4-hydroxy-3-(all-trans-polyprenyl)benzoate + 2 reduced [2Fe-2S]-[ferredoxin] + O2 + 2 H(+) = a 3,4-dihydroxy-5-(all-trans-polyprenyl)benzoate + 2 oxidized [2Fe-2S]-[ferredoxin] + H2O. The catalysed reaction is a 2-methoxy-6-(all-trans-polyprenyl)phenol + 2 reduced [2Fe-2S]-[ferredoxin] + O2 + 2 H(+) = a 2-methoxy-6-(all-trans-polyprenyl)benzene-1,4-diol + 2 oxidized [2Fe-2S]-[ferredoxin] + H2O. It functions in the pathway cofactor biosynthesis; ubiquinone biosynthesis. FAD-dependent monooxygenase required for two non-consecutive steps during ubiquinone biosynthesis. Required for the C5-ring hydroxylation during ubiquinone biosynthesis by catalyzing the hydroxylation of 4-hydroxy-3-(all-trans-polyprenyl)benzoic acid to 3,4-dihydroxy-5-(all-trans-polyprenyl)benzoic acid. Also acts downstream of coq4, for the C1-hydroxylation during ubiquinone biosynthesis by catalyzing the hydroxylation of 2-methoxy-6-(all-trans-polyprenyl)phenol to 2-methoxy-6-(all-trans-polyprenyl)benzene-1,4-diol. The electrons required for the hydroxylation reaction are funneled indirectly to Coq6 from NADPH via a ferredoxin/ferredoxin reductase system. This is Ubiquinone biosynthesis monooxygenase COQ6, mitochondrial from Drosophila melanogaster (Fruit fly).